The following is a 316-amino-acid chain: tRNA dimethylallyltransferase (316 aa).

15–22 (GPTASGKS) contributes to the ATP binding site. A substrate-binding site is contributed by 17-22 (TASGKS). The tract at residues 40–43 (DSRQ) is interaction with substrate tRNA.

The protein belongs to the IPP transferase family. As to quaternary structure, monomer. The cofactor is Mg(2+).

It carries out the reaction adenosine(37) in tRNA + dimethylallyl diphosphate = N(6)-dimethylallyladenosine(37) in tRNA + diphosphate. Its function is as follows. Catalyzes the transfer of a dimethylallyl group onto the adenine at position 37 in tRNAs that read codons beginning with uridine, leading to the formation of N6-(dimethylallyl)adenosine (i(6)A). This is tRNA dimethylallyltransferase from Chlorobium limicola (strain DSM 245 / NBRC 103803 / 6330).